The sequence spans 43 residues: Protein PsbN (43 aa).

Residues Leu-7–Phe-27 form a helical membrane-spanning segment.

This sequence belongs to the PsbN family.

It localises to the cellular thylakoid membrane. Its function is as follows. May play a role in photosystem I and II biogenesis. In Synechococcus sp. (strain JA-3-3Ab) (Cyanobacteria bacterium Yellowstone A-Prime), this protein is Protein PsbN.